The sequence spans 2205 residues: Genome polyprotein (2205 aa).

Gly2 carries the N-myristoyl glycine; by host lipid modification. Residues 2–1518 lie on the Cytoplasmic side of the membrane; it reads GAQVSSQKVG…NINRAMTILQ (1517 aa). Positions 579 to 599 are amphipathic alpha-helix; it reads GLGDLIEGVVEGVTRNALTPL. Polar residues predominate over residues 598-613; that stretch reads PLTPVNNLPDTRSSGP. Positions 598–619 are disordered; sequence PLTPVNNLPDTRSSGPAHSKET. Active-site for protease 2A activity residues include His899 and Asp917. Positions 934 and 936 each coordinate Zn(2+). The For protease 2A activity role is filled by Cys988. Zn(2+) is bound by residues Cys994 and His996. The membrane-binding stretch occupies residues 1126–1198; sequence GDSWLKKFTE…HQSCPSQEHQ (73 aa). An oligomerization region spans residues 1126-1264; the sequence is GDSWLKKFTE…SPGTGKSVAT (139 aa). The RNA-binding stretch occupies residues 1147–1151; the sequence is SNKIS. In terms of domain architecture, SF3 helicase spans 1230–1386; it reads EHTINNYVQF…SEYSRDGKLN (157 aa). 1254 to 1261 contributes to the ATP binding site; sequence GSPGTGKS. Zn(2+)-binding residues include Cys1394, Cys1397, Cys1406, and Cys1411. The segment at 1394 to 1411 adopts a C4-type zinc-finger fold; the sequence is CKNCHQPANFKRCCPLVC. Residues 1438–1445 are RNA-binding; it reads ERNRRSSI. The tract at residues 1449-1454 is oligomerization; sequence MEALFQ. Residues 1519–1534 lie within the membrane without spanning it; that stretch reads AVTTFAAVAGVVYVMY. Residues 1535–2205 are Cytoplasmic-facing; sequence KLFAGHQGAY…TLYRRWLDSF (671 aa). Tyr1544 is subject to O-(5'-phospho-RNA)-tyrosine. Positions 1564–1742 constitute a Peptidase C3 domain; it reads GPGFDYAVAM…FAAALKRSYF (179 aa). Residues His1603, Glu1634, and Cys1710 each act as for protease 3C activity in the active site. Residues 1971 to 2086 form the RdRp catalytic domain; it reads MEEKLFDYTG…SYPHEVDASL (116 aa). 2 residues coordinate Mg(2+): Asp1977 and Asp2072.

This sequence belongs to the picornaviruses polyprotein family. In terms of assembly, interacts with capsid protein VP1 and capsid protein VP3 to form heterotrimeric protomers. Interacts with capsid protein VP0, and capsid protein VP3 to form heterotrimeric protomers. Interacts with human PVR. Five protomers subsequently associate to form pentamers which serve as building blocks for the capsid. Interacts with capsid protein VP2, capsid protein VP3 and capsid protein VP4 following cleavage of capsid protein VP0. As to quaternary structure, interacts with capsid protein VP1 and capsid protein VP3 in the mature capsid. In terms of assembly, interacts with capsid protein VP0 and capsid protein VP1 to form heterotrimeric protomers. Five protomers subsequently associate to form pentamers which serve as building blocks for the capsid. Interacts with capsid protein VP4 in the mature capsid. Interacts with protein 2C; this interaction may be important for virion morphogenesis. Interacts with capsid protein VP1 and capsid protein VP3. As to quaternary structure, homodimer. In terms of assembly, homohexamer; forms a hexameric ring structure with 6-fold symmetry characteristic of AAA+ ATPases. Interacts (via N-terminus) with host RTN3 (via reticulon domain); this interaction is important for viral replication. Interacts with capsid protein VP3; this interaction may be important for virion morphogenesis. Interacts with protein 3CD. As to quaternary structure, homodimer. Interacts with host GBF1. Interacts (via GOLD domain) with host ACBD3 (via GOLD domain); this interaction allows the formation of a viral protein 3A/ACBD3 heterotetramer with a 2:2 stoichiometry, which will stimulate the recruitment of host PI4KB in order to synthesize PI4P at the viral RNA replication sites. In terms of assembly, interacts with RNA-directed RNA polymerase. Interacts with protein 3AB and with RNA-directed RNA polymerase. As to quaternary structure, interacts with Viral protein genome-linked and with protein 3CD. Requires Mg(2+) as cofactor. In terms of processing, specific enzymatic cleavages in vivo by the viral proteases yield processing intermediates and the mature proteins. Myristoylation is required for the formation of pentamers during virus assembly. Further assembly of 12 pentamers and a molecule of genomic RNA generates the provirion. Post-translationally, during virion maturation, immature virions are rendered infectious following cleavage of VP0 into VP4 and VP2. This maturation seems to be an autocatalytic event triggered by the presence of RNA in the capsid and it is followed by a conformational change infectious virion. In terms of processing, myristoylation is required during RNA encapsidation and formation of the mature virus particle. VPg is uridylylated by the polymerase into VPg-pUpU. This acts as a nucleotide-peptide primer for the genomic RNA replication.

Its subcellular location is the virion. It is found in the host cytoplasm. It localises to the host cytoplasmic vesicle membrane. The protein resides in the host nucleus. The catalysed reaction is a ribonucleoside 5'-triphosphate + H2O = a ribonucleoside 5'-diphosphate + phosphate + H(+). It carries out the reaction Selective cleavage of Tyr-|-Gly bond in the picornavirus polyprotein.. The enzyme catalyses RNA(n) + a ribonucleoside 5'-triphosphate = RNA(n+1) + diphosphate. It catalyses the reaction Selective cleavage of Gln-|-Gly bond in the poliovirus polyprotein. In other picornavirus reactions Glu may be substituted for Gln, and Ser or Thr for Gly.. With respect to regulation, replication or transcription is subject to high level of random mutations by the nucleotide analog ribavirin. Its function is as follows. Forms an icosahedral capsid of pseudo T=3 symmetry with capsid proteins VP2 and VP3. The capsid is 300 Angstroms in diameter, composed of 60 copies of each capsid protein and enclosing the viral positive strand RNA genome. Capsid protein VP1 mainly forms the vertices of the capsid. Capsid protein VP1 interacts with host cell receptor PVR to provide virion attachment to target host cells. This attachment induces virion internalization predominantly through clathrin- and caveolin-independent endocytosis in Hela cells and through caveolin-mediated endocytosis in brain microvascular endothelial cells. Tyrosine kinases are probably involved in the entry process. Virus binding to PVR induces increased junctional permeability and rearrangement of junctional proteins. Modulation of endothelial tight junctions, as well as cytolytic infection of endothelial cells themselves, may result in loss of endothelial integrity which may help the virus to reach the CNS. After binding to its receptor, the capsid undergoes conformational changes. Capsid protein VP1 N-terminus (that contains an amphipathic alpha-helix) and capsid protein VP4 are externalized. Together, they shape a pore in the host membrane through which viral genome is translocated to host cell cytoplasm. In terms of biological role, forms an icosahedral capsid of pseudo T=3 symmetry with capsid proteins VP2 and VP3. The capsid is 300 Angstroms in diameter, composed of 60 copies of each capsid protein and enclosing the viral positive strand RNA genome. Lies on the inner surface of the capsid shell. After binding to the host receptor, the capsid undergoes conformational changes. Capsid protein VP4 is released, Capsid protein VP1 N-terminus is externalized, and together, they shape a pore in the host membrane through which the viral genome is translocated into the host cell cytoplasm. Functionally, component of immature procapsids, which is cleaved into capsid proteins VP4 and VP2 after maturation. Allows the capsid to remain inactive before the maturation step. Its function is as follows. Cysteine protease that cleaves viral polyprotein and specific host proteins. It is responsible for the autocatalytic cleavage between the P1 and P2 regions, which is the first cleavage occurring in the polyprotein. Also cleaves the host translation initiation factor EIF4G1, in order to shut down the capped cellular mRNA translation. Inhibits the host nucleus-cytoplasm protein and RNA trafficking by cleaving host members of the nuclear pores including NUP98, NUP62 and NUP153. Counteracts stress granule formation probably by antagonizing its assembly or promoting its dissassembly. Cleaves and inhibits host IFIH1/MDA5, thereby inhibiting the type-I IFN production and the establishment of the antiviral state. Cleaves and inhibits host MAVS, thereby inhibiting the type-I IFN production and the establishment of the antiviral state. In terms of biological role, plays an essential role in the virus replication cycle by acting as a viroporin. Creates a pore in the host endoplasmic reticulum and as a consequence releases Ca2+ in the cytoplasm of infected cell. In turn, high levels of cytoplasmic calcium may trigger membrane trafficking and transport of viral ER-associated proteins to viroplasms, sites of viral genome replication. Induces and associates with structural rearrangements of intracellular membranes. Displays RNA-binding, nucleotide binding and NTPase activities. May play a role in virion morphogenesis and viral RNA encapsidation by interacting with the capsid protein VP3. Functionally, localizes the viral replication complex to the surface of membranous vesicles. Together with protein 3CD binds the Cis-Active RNA Element (CRE) which is involved in RNA synthesis initiation. Acts as a cofactor to stimulate the activity of 3D polymerase, maybe through a nucleid acid chaperone activity. Its function is as follows. Localizes the viral replication complex to the surface of membranous vesicles. It inhibits host cell endoplasmic reticulum-to-Golgi apparatus transport and causes the disassembly of the Golgi complex, possibly through GBF1 interaction. This would result in depletion of MHC, trail receptors and IFN receptors at the host cell surface. Plays an essential role in viral RNA replication by recruiting ACBD3 and PI4KB at the viral replication sites, thereby allowing the formation of the rearranged membranous structures where viral replication takes place. In terms of biological role, acts as a primer for viral RNA replication and remains covalently bound to viral genomic RNA. VPg is uridylylated prior to priming replication into VPg-pUpU. The oriI viral genomic sequence may act as a template for this. The VPg-pUpU is then used as primer on the genomic RNA poly(A) by the RNA-dependent RNA polymerase to replicate the viral genome. During genome replication, the VPg-RNA linkage is removed by the host TDP2, thereby accelerating replication. During the late stage of the replication cycle, host TDP2 is excluded from sites of viral RNA synthesis and encapsidation, allowing for the generation of progeny virions. Involved in the viral replication complex and viral polypeptide maturation. It exhibits protease activity with a specificity and catalytic efficiency that is different from protease 3C. Protein 3CD lacks polymerase activity. Protein 3CD binds to the 5'UTR of the viral genome. Functionally, major viral protease that mediates proteolytic processing of the polyprotein. Cleaves host EIF5B, contributing to host translation shutoff. Also cleaves host PABPC1, contributing to host translation shutoff. Cleaves host RIGI and thus contributes to the inhibition of type I interferon production. Cleaves host NLRP1, triggers host N-glycine-mediated degradation of the autoinhibitory NLRP1 N-terminal fragment. Inhibits the integrated stress response (ISR) in the infected cell by cleaving host G3BP1. Stress granule formation is thus inhibited, which allows protein synthesis and viral replication. Its function is as follows. Replicates the viral genomic RNA on the surface of intracellular membranes. May form linear arrays of subunits that propagate along a strong head-to-tail interaction called interface-I. Covalently attaches UMP to a tyrosine of VPg, which is used to prime RNA synthesis. The positive stranded RNA genome is first replicated at virus induced membranous vesicles, creating a dsRNA genomic replication form. This dsRNA is then used as template to synthesize positive stranded RNA genomes. ss(+)RNA genomes are either translated, replicated or encapsidated. This Homo sapiens (Human) protein is Genome polyprotein.